A 292-amino-acid chain; its full sequence is Protein rogdi homolog (292 aa).

Positions 1–12 are enriched in polar residues; it reads MEVQSLTITTNY. The disordered stretch occupies residues 1-25; the sequence is MEVQSLTITTNYPPKPASPNPQDIR.

It belongs to the rogdi family.

The protein resides in the nucleus envelope. This is Protein rogdi homolog from Caenorhabditis elegans.